The following is a 130-amino-acid chain: Small ribosomal subunit protein uS9 (130 aa).

This sequence belongs to the universal ribosomal protein uS9 family.

This is Small ribosomal subunit protein uS9 from Aster yellows witches'-broom phytoplasma (strain AYWB).